We begin with the raw amino-acid sequence, 456 residues long: Bifunctional protein GlmU (456 aa).

The pyrophosphorylase stretch occupies residues 1-229 (MYKCALILAA…FEEILGVNSR (229 aa)). UDP-N-acetyl-alpha-D-glucosamine-binding positions include 8-11 (LAAG), Lys-22, Gln-73, and 78-79 (GT). Asp-103 contributes to the Mg(2+) binding site. UDP-N-acetyl-alpha-D-glucosamine contacts are provided by Gly-140, Glu-155, Asn-170, and Asn-227. Asn-227 contributes to the Mg(2+) binding site. Positions 230-250 (LQLCQVGKVMQKRINEKHMEN) are linker. The N-acetyltransferase stretch occupies residues 251-456 (GSTLIDPDNT…GWVDKKGLLK (206 aa)). UDP-N-acetyl-alpha-D-glucosamine-binding residues include Arg-332 and Lys-350. His-362 serves as the catalytic Proton acceptor. Tyr-365 and Asn-376 together coordinate UDP-N-acetyl-alpha-D-glucosamine. Residues 385–386 (NY), Ala-422, and Arg-439 contribute to the acetyl-CoA site.

In the N-terminal section; belongs to the N-acetylglucosamine-1-phosphate uridyltransferase family. It in the C-terminal section; belongs to the transferase hexapeptide repeat family. In terms of assembly, homotrimer. The cofactor is Mg(2+).

The protein localises to the cytoplasm. The enzyme catalyses alpha-D-glucosamine 1-phosphate + acetyl-CoA = N-acetyl-alpha-D-glucosamine 1-phosphate + CoA + H(+). It carries out the reaction N-acetyl-alpha-D-glucosamine 1-phosphate + UTP + H(+) = UDP-N-acetyl-alpha-D-glucosamine + diphosphate. The protein operates within nucleotide-sugar biosynthesis; UDP-N-acetyl-alpha-D-glucosamine biosynthesis; N-acetyl-alpha-D-glucosamine 1-phosphate from alpha-D-glucosamine 6-phosphate (route II): step 2/2. Its pathway is nucleotide-sugar biosynthesis; UDP-N-acetyl-alpha-D-glucosamine biosynthesis; UDP-N-acetyl-alpha-D-glucosamine from N-acetyl-alpha-D-glucosamine 1-phosphate: step 1/1. It functions in the pathway bacterial outer membrane biogenesis; LPS lipid A biosynthesis. Functionally, catalyzes the last two sequential reactions in the de novo biosynthetic pathway for UDP-N-acetylglucosamine (UDP-GlcNAc). The C-terminal domain catalyzes the transfer of acetyl group from acetyl coenzyme A to glucosamine-1-phosphate (GlcN-1-P) to produce N-acetylglucosamine-1-phosphate (GlcNAc-1-P), which is converted into UDP-GlcNAc by the transfer of uridine 5-monophosphate (from uridine 5-triphosphate), a reaction catalyzed by the N-terminal domain. This is Bifunctional protein GlmU from Clostridium acetobutylicum (strain ATCC 824 / DSM 792 / JCM 1419 / IAM 19013 / LMG 5710 / NBRC 13948 / NRRL B-527 / VKM B-1787 / 2291 / W).